The following is a 335-amino-acid chain: MMADSTRNAFGAYSITEIITTRNQNNFNANTKNQNQNTSNTQSSGGITRKPVMNDGLYALFDQLLKGVTFEESIYRGYDYSHLPNLETVFNTASDYVNGQYKIGFSEAQLDGYTLNKTFSVIMPEFSFSLEFIKNEEQSDRNPDENEQLKPKTRRIVVELVSLFNRDEIEYTPEQVRGEIALIALFKLYITGFLYHLNVNKSVYDQQLNLEKYRPLLVAIVGFESIDVKLKKLTPLYYTLATFSNYPLNILRYSLKTIVEVTNEMDQIIKRDGLFKQIDIKPMLGNTMSVGYSLRGIDNSSLFLAPKHYRQVRSRDDSNVREIISYDLSKIDFGF.

Residues 27-42 (FNANTKNQNQNTSNTQ) show a composition bias toward low complexity. The tract at residues 27-48 (FNANTKNQNQNTSNTQSSGGIT) is disordered.

The sequence is that of Non-structural protein P9-1 (S9) from Fiji disease virus (isolate Sugarcane) (FDV).